Reading from the N-terminus, the 110-residue chain is MRRYFIDDETPWEELGDGIKRKIITWSDDLMMVCVHFAKGAIGTPHKHDIHDQIAYVAAGSFEVVIEGEKRILKTGDAYMAVKNEMHGVVSLEEGSVLIDTFSPKRADFL.

The Cupin type-2 domain occupies 35-94; that stretch reads VHFAKGAIGTPHKHDIHDQIAYVAAGSFEVVIEGEKRILKTGDAYMAVKNEMHGVVSLEE.

Its pathway is glycan metabolism; pectin degradation. May have a role in pathogenicity. This Dickeya dadantii (strain 3937) (Erwinia chrysanthemi (strain 3937)) protein is Pectin degradation protein KdgF (kdgF).